Consider the following 533-residue polypeptide: T-complex protein 1 subunit delta (533 aa).

The disordered stretch occupies residues 1–24 (MVVKPAARGMKPQGQAYKDKSKPA).

Belongs to the TCP-1 chaperonin family. In terms of assembly, heterooligomeric complex of about 850 to 900 kDa that forms two stacked rings, 12 to 16 nm in diameter.

The protein localises to the cytoplasm. Molecular chaperone; assists the folding of proteins upon ATP hydrolysis. Known to play a role, in vitro, in the folding of actin and tubulin. This is T-complex protein 1 subunit delta from Ochlerotatus triseriatus (Eastern treehole mosquito).